Reading from the N-terminus, the 422-residue chain is Phosphoribosylamine--glycine ligase (422 aa).

The 206-residue stretch at 107–312 (KEVMAAAGVR…LGQLLYAAGT (206 aa)) folds into the ATP-grasp domain. 138–193 (PPVGDLSWVVKDDRLAAGKGVVVTSDRDVARTHAAGLLEAGHPVLLESYLDGPEVS) contributes to the ATP binding site. The Mg(2+) site is built by Glu282 and Asn284.

This sequence belongs to the GARS family. Mg(2+) is required as a cofactor. Requires Mn(2+) as cofactor.

The enzyme catalyses 5-phospho-beta-D-ribosylamine + glycine + ATP = N(1)-(5-phospho-beta-D-ribosyl)glycinamide + ADP + phosphate + H(+). It participates in purine metabolism; IMP biosynthesis via de novo pathway; N(1)-(5-phospho-D-ribosyl)glycinamide from 5-phospho-alpha-D-ribose 1-diphosphate: step 2/2. This is Phosphoribosylamine--glycine ligase from Mycobacterium leprae (strain TN).